The chain runs to 530 residues: Light-independent protochlorophyllide reductase subunit B (530 aa).

Aspartate 36 serves as a coordination point for [4Fe-4S] cluster. Aspartate 290 serves as the catalytic Proton donor. Position 425-426 (425-426 (GL)) interacts with substrate. Positions 448-483 (LGHLGGHASETKTSSKGINQSPNNHSPAGESIHWTS) are disordered. A compositionally biased stretch (polar residues) spans 458 to 473 (TKTSSKGINQSPNNHS).

The protein belongs to the ChlB/BchB/BchZ family. As to quaternary structure, protochlorophyllide reductase is composed of three subunits; ChlL, ChlN and ChlB. Forms a heterotetramer of two ChlB and two ChlN subunits. [4Fe-4S] cluster is required as a cofactor.

It carries out the reaction chlorophyllide a + oxidized 2[4Fe-4S]-[ferredoxin] + 2 ADP + 2 phosphate = protochlorophyllide a + reduced 2[4Fe-4S]-[ferredoxin] + 2 ATP + 2 H2O. It functions in the pathway porphyrin-containing compound metabolism; chlorophyll biosynthesis (light-independent). Its function is as follows. Component of the dark-operative protochlorophyllide reductase (DPOR) that uses Mg-ATP and reduced ferredoxin to reduce ring D of protochlorophyllide (Pchlide) to form chlorophyllide a (Chlide). This reaction is light-independent. The NB-protein (ChlN-ChlB) is the catalytic component of the complex. This is Light-independent protochlorophyllide reductase subunit B from Prochlorococcus marinus (strain SARG / CCMP1375 / SS120).